Here is a 416-residue protein sequence, read N- to C-terminus: Inhibitor of growth protein 3 (416 aa).

Disordered stretches follow at residues 126–165 (LDTP…PEKK), 177–198 (SDAS…STNN), and 283–319 (QTLT…SSSL). Positions 136-152 (HHVHSHSSGEKRKHIPS) are enriched in basic residues. Over residues 156 to 165 (STTDHVPEKK) the composition is skewed to basic and acidic residues. Residues 177-187 (SDASKENTAGC) are compositionally biased toward polar residues. Composition is skewed to low complexity over residues 189–198 (TNLSSSSTNN), 283–293 (QTLTSSATTDS), and 302–319 (NNKS…SSSL). The PHD-type zinc finger occupies 358 to 407 (PRYCICNQVSYGEMVGCDNQDCPIEWFHYGCVGLSEAPKGKWYCPQCTAA). Zn(2+) is bound by residues Cys-361, Cys-363, Cys-374, Cys-379, His-385, Cys-388, Cys-401, and Cys-404.

It belongs to the ING family. In terms of assembly, interacts with H3K4me3 and to a lesser extent with H3K4me2. Component of the NuA4 histone acetyltransferase complex.

It localises to the nucleus. Its function is as follows. Component of the NuA4 histone acetyltransferase (HAT) complex which is involved in transcriptional activation of select genes principally by acetylation of nucleosomal histone H4 and H2A. This modification may both alter nucleosome - DNA interactions and promote interaction of the modified histones with other proteins which positively regulate transcription. NuA4 may also play a direct role in DNA repair when directly recruited to sites of DNA damage. This chain is Inhibitor of growth protein 3 (ing3), found in Xenopus laevis (African clawed frog).